A 116-amino-acid chain; its full sequence is Integration host factor subunit alpha (116 aa).

2 disordered regions span residues 58-80 (FGNF…GETI) and 94-116 (QKLK…EAAE). Over residues 94–105 (QKLKSTVEQSGN) the composition is skewed to polar residues.

This sequence belongs to the bacterial histone-like protein family. Heterodimer of an alpha and a beta chain.

In terms of biological role, this protein is one of the two subunits of integration host factor, a specific DNA-binding protein that functions in genetic recombination as well as in transcriptional and translational control. The polypeptide is Integration host factor subunit alpha (Bordetella avium (strain 197N)).